We begin with the raw amino-acid sequence, 264 residues long: 3-methyl-2-oxobutanoate hydroxymethyltransferase (264 aa).

D45 and D84 together coordinate Mg(2+). Residues 45–46 (DS), D84, and K112 each bind 3-methyl-2-oxobutanoate. Mg(2+) is bound at residue E114. E181 (proton acceptor) is an active-site residue.

The protein belongs to the PanB family. Homodecamer; pentamer of dimers. Mg(2+) serves as cofactor.

It is found in the cytoplasm. It catalyses the reaction 3-methyl-2-oxobutanoate + (6R)-5,10-methylene-5,6,7,8-tetrahydrofolate + H2O = 2-dehydropantoate + (6S)-5,6,7,8-tetrahydrofolate. The protein operates within cofactor biosynthesis; (R)-pantothenate biosynthesis; (R)-pantoate from 3-methyl-2-oxobutanoate: step 1/2. Catalyzes the reversible reaction in which hydroxymethyl group from 5,10-methylenetetrahydrofolate is transferred onto alpha-ketoisovalerate to form ketopantoate. In Psychromonas ingrahamii (strain DSM 17664 / CCUG 51855 / 37), this protein is 3-methyl-2-oxobutanoate hydroxymethyltransferase.